We begin with the raw amino-acid sequence, 548 residues long: MAAKEVKFGDSARKKMLVGVNVLADAVKATLGPKGRNVILEKSFGAPTITKDGVSVAKEIELEDRFENMGAQLVKDVASRANDDAGDGTTTATVLAQSIVNEGLKAVAAGMNPMDLKRGIDKATIAVVAELKKLSAPCTDTKAIAQVGTISANSDNSIGDIIAEAMEKVGKEGVITVEEGSGLENELSVVEGMQFDRGYLSPYFVNKPDTMVAELEGALILLVDKKISNIREMLPVLEAVAKAGRPLLIVAEDVEGEALATLVVNNMRGIVKVAAVKAPGFGDRRKAMLQDIAVLTGGTVISEEIGLSLESTTLEHLGSAKRVTLSKENTIIVDGAGNDGDIQARIAQIRAQVAETSSDYDREKLQERLAKLSGGVAVIKVGAGSEVEMKEKKARVEDALHATRAAVEEGVVPGGGVALIRALNAIINLKGDNADQDVGIAVLRRAVEAPLRQIAANSGDEPSVVVNEVKNGKGNFGYNAATGEYGDMIEMGILDPTKVTRSALQAASSIGGLILTTEAAVADAPKKDGAAGGGMPDMGGMGGMGGMM.

Residues 30-33 (TLGP), lysine 51, 87-91 (DGTTT), glycine 415, 479-481 (NAA), and aspartate 495 contribute to the ATP site.

Belongs to the chaperonin (HSP60) family. In terms of assembly, forms a cylinder of 14 subunits composed of two heptameric rings stacked back-to-back. Interacts with the co-chaperonin GroES.

The protein localises to the cytoplasm. The catalysed reaction is ATP + H2O + a folded polypeptide = ADP + phosphate + an unfolded polypeptide.. In terms of biological role, together with its co-chaperonin GroES, plays an essential role in assisting protein folding. The GroEL-GroES system forms a nano-cage that allows encapsulation of the non-native substrate proteins and provides a physical environment optimized to promote and accelerate protein folding. This is Chaperonin GroEL from Pseudomonas fluorescens (strain Pf0-1).